A 926-amino-acid polypeptide reads, in one-letter code: Disease resistance protein RPM1 (926 aa).

A leucine-zipper region spans residues isoleucine 10–leucine 45. One can recognise an NB-ARC domain in the interval aspartate 153 to glycine 467. An ATP-binding site is contributed by glycine 200 to threonine 207. LRR repeat units follow at residues leucine 561–leucine 580, asparagine 581–methionine 603, asparagine 605–lysine 625, leucine 626–leucine 649, leucine 686–glutamine 707, leucine 708–isoleucine 731, threonine 756–threonine 777, leucine 778–arginine 804, phenylalanine 825–methionine 836, lysine 837–alanine 859, and leucine 876–arginine 900.

This sequence belongs to the disease resistance NB-LRR family. In terms of assembly, interacts directly with RIN4 via its N-terminal region. Interacts (via N-terminus) with RIN2 and RIN3 (via C-terminus). Interacts with TIP49A, a protein known to interact with the TATA binding protein complex (TBP). Binds to MORC1/CRT1. Interacts, via its NB-ARC domain, with RIN13.

It localises to the endomembrane system. It is found in the cell membrane. In terms of biological role, disease resistance (R) protein that specifically recognizes the AvrRpm1 type III effector avirulence protein from Pseudomonas syringae. Resistance proteins guard the plant against pathogens that contain an appropriate avirulence protein via an indirect interaction with this avirulence protein. That triggers a defense system including the hypersensitive response (HR), which restricts the pathogen growth. Acts via its interaction with RIN4, and probably triggers the plant resistance when RIN4 is phosphorylated by AvrRpm1. It is then degraded at the onset of the hypersensitive response. In Arabidopsis thaliana (Mouse-ear cress), this protein is Disease resistance protein RPM1.